The sequence spans 505 residues: Histidine ammonia-lyase (505 aa).

The 5-imidazolinone (Ala-Gly) cross-link spans 141–143 (ASG). Ser142 carries the 2,3-didehydroalanine (Ser) modification.

This sequence belongs to the PAL/histidase family. In terms of processing, contains an active site 4-methylidene-imidazol-5-one (MIO), which is formed autocatalytically by cyclization and dehydration of residues Ala-Ser-Gly.

The protein localises to the cytoplasm. It carries out the reaction L-histidine = trans-urocanate + NH4(+). The protein operates within amino-acid degradation; L-histidine degradation into L-glutamate; N-formimidoyl-L-glutamate from L-histidine: step 1/3. This Bacillus cytotoxicus (strain DSM 22905 / CIP 110041 / 391-98 / NVH 391-98) protein is Histidine ammonia-lyase.